Here is a 332-residue protein sequence, read N- to C-terminus: Tsukubadiene synthase (332 aa).

Residues Asp-75 and Glu-80 each coordinate Mg(2+). The DDXXXE motif motif lies at 75–80 (DDHLDE). Arg-165 lines the substrate pocket. Mg(2+)-binding residues include Ser-212, Ser-216, and Glu-220. The short motif at 212–220 (SDLHSFQLE) is the SXXXSXXXE motif element. 298–299 (RY) serves as a coordination point for substrate.

This sequence belongs to the terpene synthase family. Requires Mg(2+) as cofactor.

It carries out the reaction (2E,6E,10E)-geranylgeranyl diphosphate = tsukubadiene + diphosphate. Functionally, catalyzes the formation of the 5-9-5 ring skeleton (3S,6S,11R,14S)-tsukubadiene from geranylgeranyl diphosphate (GGPP) via a 1,11-cyclization and a 10Re,14Re-cyclization. In Streptomyces tsukubensis (strain DSM 42081 / NBRC 108919 / NRRL 18488 / 9993), this protein is Tsukubadiene synthase.